The chain runs to 622 residues: DNA topoisomerase 3 (622 aa).

Residues 2-148 (RVLCVAEKNS…SIQVIRADFN (147 aa)) enclose the Toprim domain. Residues 166 to 596 (SKNAADAVDA…MILTQFRDVF (431 aa)) enclose the Topo IA-type catalytic domain. Tyrosine 330 serves as the catalytic O-(5'-phospho-DNA)-tyrosine intermediate.

The protein belongs to the type IA topoisomerase family. In terms of assembly, interacts with hus2.

It catalyses the reaction ATP-independent breakage of single-stranded DNA, followed by passage and rejoining.. Releases the supercoiling and torsional tension of DNA introduced during the DNA replication and transcription by transiently cleaving and rejoining one strand of the DNA duplex. Introduces a single-strand break via transesterification at a target site in duplex DNA. The scissile phosphodiester is attacked by the catalytic tyrosine of the enzyme, resulting in the formation of a DNA-(5'-phosphotyrosyl)-enzyme intermediate and the expulsion of a 3'-OH DNA strand. The free DNA strand than undergoes passage around the unbroken strand thus removing DNA supercoils. Finally, in the religation step, the DNA 3'-OH attacks the covalent intermediate to expel the active-site tyrosine and restore the DNA phosphodiester backbone. The polypeptide is DNA topoisomerase 3 (top3) (Schizosaccharomyces pombe (strain 972 / ATCC 24843) (Fission yeast)).